A 470-amino-acid chain; its full sequence is Probable citrate synthase, mitochondrial (470 aa).

Residues histidine 297, histidine 351, and aspartate 406 contribute to the active site.

This sequence belongs to the citrate synthase family. As to quaternary structure, homodimer.

It is found in the mitochondrion matrix. The enzyme catalyses oxaloacetate + acetyl-CoA + H2O = citrate + CoA + H(+). It functions in the pathway carbohydrate metabolism; tricarboxylic acid cycle; isocitrate from oxaloacetate: step 1/2. The chain is Probable citrate synthase, mitochondrial from Leishmania infantum.